The primary structure comprises 184 residues: Ribosome-recycling factor (184 aa).

Belongs to the RRF family.

The protein resides in the cytoplasm. Its function is as follows. Responsible for the release of ribosomes from messenger RNA at the termination of protein biosynthesis. May increase the efficiency of translation by recycling ribosomes from one round of translation to another. The protein is Ribosome-recycling factor of Acinetobacter baumannii (strain SDF).